We begin with the raw amino-acid sequence, 393 residues long: Mitogen-activated protein kinase SIPK (393 aa).

The span at 1–11 (MDGSGQQTDTM) shows a compositional bias: polar residues. The segment at 1–31 (MDGSGQQTDTMMSDAGAEQPPPAPQPVAGMD) is disordered. The Protein kinase domain occupies 60 to 345 (KPPILPIGKG…VEGALAHPYL (286 aa)). ATP-binding positions include 66-74 (IGKGAYGIV) and Lys-89. The active-site Proton acceptor is Asp-186. Residues 218 to 220 (TEY) carry the TXY motif.

This sequence belongs to the protein kinase superfamily. CMGC Ser/Thr protein kinase family. MAP kinase subfamily. As to quaternary structure, interacts with SIPKK.

The catalysed reaction is L-tyrosyl-[protein] + ATP = O-phospho-L-tyrosyl-[protein] + ADP + H(+). It carries out the reaction L-seryl-[protein] + ATP = O-phospho-L-seryl-[protein] + ADP + H(+). The enzyme catalyses L-threonyl-[protein] + ATP = O-phospho-L-threonyl-[protein] + ADP + H(+). Its activity is regulated as follows. Activated by threonine and tyrosine phosphorylation. Phosphorylates myelin basic protein (MBP) in vitro. May be involved in disease resistance. The protein is Mitogen-activated protein kinase SIPK of Nicotiana tabacum (Common tobacco).